Here is a 630-residue protein sequence, read N- to C-terminus: Probable potassium transport system protein Kup (630 aa).

A run of 12 helical transmembrane segments spans residues 17 to 37 (LAIA…LYSL), 51 to 71 (PSAI…VVGI), 105 to 125 (ITGL…GDAV), 144 to 164 (PQLS…LFWI), 175 to 195 (LFGP…IYHI), 218 to 238 (VLLA…AEAL), 255 to 275 (YVLV…LLLL), 283 to 303 (PFFL…STVA), 344 to 364 (IYVP…VIGF), 374 to 394 (YGIA…VVMV), 402 to 422 (LLVA…FGAN), and 428 to 448 (QGGW…MTWY).

The protein belongs to the HAK/KUP transporter (TC 2.A.72) family.

It is found in the cell inner membrane. It catalyses the reaction K(+)(in) + H(+)(in) = K(+)(out) + H(+)(out). Transport of potassium into the cell. Likely operates as a K(+):H(+) symporter. This chain is Probable potassium transport system protein Kup, found in Burkholderia pseudomallei (strain 1710b).